The primary structure comprises 295 residues: uncharacterized protein (295 aa).

Positions 4 to 233 (IVVKSMAMEK…LQNTIERLVL (230 aa)) constitute a Sigma-54 factor interaction domain.

This is an uncharacterized protein from Pseudomonas sp. (strain NS671).